Consider the following 622-residue polypeptide: Probable Xaa-Pro aminopeptidase P (622 aa).

Asp-419, Asp-430, Glu-528, and Glu-542 together coordinate Mn(2+).

It belongs to the peptidase M24B family. Requires Mn(2+) as cofactor.

The enzyme catalyses Release of any N-terminal amino acid, including proline, that is linked to proline, even from a dipeptide or tripeptide.. Catalyzes the removal of a penultimate prolyl residue from the N-termini of peptides. The chain is Probable Xaa-Pro aminopeptidase P (AMPP) from Coprinopsis cinerea (strain Okayama-7 / 130 / ATCC MYA-4618 / FGSC 9003) (Inky cap fungus).